We begin with the raw amino-acid sequence, 75 residues long: Large ribosomal subunit protein bL28c (75 aa).

It belongs to the bacterial ribosomal protein bL28 family.

The protein localises to the plastid. It localises to the chloroplast. This Cyanidioschyzon merolae (strain NIES-3377 / 10D) (Unicellular red alga) protein is Large ribosomal subunit protein bL28c.